The following is a 693-amino-acid chain: Phenoloxidase subunit 2 (693 aa).

Residues 1–51 (MADVFESLELLFDRPNEPLITPKGENNSVFQLTEQFLTEDYANNGIELNNR) constitute a propeptide that is removed on maturation. Residues Asn-26 and Asn-64 are each glycosylated (N-linked (GlcNAc...) asparagine). Residues His-213, His-217, and His-243 each coordinate Cu cation. Glu-351 serves as the catalytic Proton acceptor. His-366, His-370, and His-406 together coordinate Cu cation. 2 N-linked (GlcNAc...) asparagine glycosylation sites follow: Asn-462 and Asn-494. Disulfide bonds link Cys-583–Cys-627 and Cys-585–Cys-634. Residue Asn-680 is glycosylated (N-linked (GlcNAc...) asparagine).

Heterodimer. Cu(2+) serves as cofactor. The N-terminus is blocked. In terms of tissue distribution, synthesized by hemocytes and released into the hemolymph plasma.

The protein resides in the secreted. The catalysed reaction is 2 L-dopa + O2 = 2 L-dopaquinone + 2 H2O. It carries out the reaction L-tyrosine + O2 = L-dopaquinone + H2O. Its function is as follows. This is a copper-containing oxidase that functions in the formation of pigments such as melanins and other polyphenolic compounds. Catalyzes the rate-limiting conversions of tyrosine to DOPA, DOPA to DOPA-quinone and possibly 5,6 dihydroxyindole to indole-5'6 quinone. The sequence is that of Phenoloxidase subunit 2 from Bombyx mori (Silk moth).